Consider the following 366-residue polypeptide: Polyprenyl transferase ausN (366 aa).

The next 8 membrane-spanning stretches (helical) occupy residues valine 97 to leucine 117, leucine 121 to isoleucine 141, leucine 164 to phenylalanine 184, leucine 215 to proline 235, isoleucine 239 to valine 259, leucine 287 to glycine 307, leucine 308 to leucine 328, and serine 346 to valine 366.

This sequence belongs to the UbiA prenyltransferase family. The cofactor is Mg(2+).

The protein resides in the membrane. The catalysed reaction is 3,5-dimethylorsellinate + (2E,6E)-farnesyl diphosphate = (3R)-3-farnesyl-6-hydroxy-2,3,5-trimethyl-4-oxocyclohexa-1,5-diene-1-carboxylate + diphosphate + H(+). It functions in the pathway secondary metabolite biosynthesis; terpenoid biosynthesis. Functionally, polyprenyl transferase; part of the gene cluster that mediates the biosynthesis of calidodehydroaustin, a fungal meroterpenoid. The first step of the pathway is the synthesis of 3,5-dimethylorsellinic acid by the polyketide synthase ausA. 3,5-dimethylorsellinic acid is then prenylated by the polyprenyl transferase ausN. Further epoxidation by the FAD-dependent monooxygenase ausM and cyclization by the probable terpene cyclase ausL lead to the formation of protoaustinoid A. Protoaustinoid A is then oxidized to spiro-lactone preaustinoid A3 by the combined action of the FAD-binding monooxygenases ausB and ausC, and the dioxygenase ausE. Acid-catalyzed keto-rearrangement and ring contraction of the tetraketide portion of preaustinoid A3 by ausJ lead to the formation of preaustinoid A4. The aldo-keto reductase ausK, with the help of ausH, is involved in the next step by transforming preaustinoid A4 into isoaustinone which is in turn hydroxylated by the P450 monooxygenase ausI to form austinolide. The cytochrome P450 monooxygenase ausG modifies austinolide to austinol. Austinol is further acetylated to austin by the O-acetyltransferase ausP, which spontaneously changes to dehydroaustin. The cytochrome P450 monooxygenase ausR then converts dehydroaustin is into 7-dehydrodehydroaustin. The hydroxylation catalyzed by ausR permits the O-acetyltransferase ausQ to add an additional acetyl group to the molecule, leading to the formation of acetoxydehydroaustin. The short chain dehydrogenase ausT catalyzes the reduction of the double bond present between carbon atoms 1 and 2 to convert 7-dehydrodehydroaustin into 1,2-dihydro-7-hydroxydehydroaustin. AusQ catalyzes not only an acetylation reaction but also the addition of the PKS ausV diketide product to 1,2-dihydro-7-hydroxydehydroaustin, forming precalidodehydroaustin. Finally, the iron/alpha-ketoglutarate-dependent dioxygenase converts precalidodehydroaustin into calidodehydroaustin. The sequence is that of Polyprenyl transferase ausN from Aspergillus calidoustus.